Reading from the N-terminus, the 391-residue chain is B2 bradykinin receptor (391 aa).

Over 1–60 the chain is Extracellular; that stretch reads MFSPWKISMFLSVREDSVPTTASFSADMLNVTLQGPTLNGTFAQSKCPQVEWLGWLNTIQ. Residues asparagine 30 and asparagine 39 are each glycosylated (N-linked (GlcNAc...) asparagine). Residues 61 to 84 form a helical membrane-spanning segment; the sequence is PPFLWVLFVLATLENIFVLSVFCL. Over 85-93 the chain is Cytoplasmic; that stretch reads HKSSCTVAE. A helical membrane pass occupies residues 94–118; sequence IYLGNLAAADLILACGLPFWAITIS. The Extracellular portion of the chain corresponds to 119–131; it reads NNFDWLFGETLCR. A disulfide bond links cysteine 130 and cysteine 211. Residues 132 to 153 traverse the membrane as a helical segment; sequence VVNAIISMNLYSSICFLMLVSI. At 154–175 the chain is on the cytoplasmic side; that stretch reads DRYLALVKTMSMGRMRGVRWAK. Tyrosine 156 carries the post-translational modification Phosphotyrosine. The helical transmembrane segment at 176–198 threads the bilayer; the sequence is LYSLVIWGCTLLLSSPMLVFRTM. Over 199–221 the chain is Extracellular; sequence KEYSDEGHNVTACVISYPSLIWE. Asparagine 207 is a glycosylation site (N-linked (GlcNAc...) asparagine). Residues 222–248 form a helical membrane-spanning segment; it reads VFTNMLLNVVGFLLPLSVITFCTMQIM. Residues 249–267 lie on the Cytoplasmic side of the membrane; the sequence is QVLRNNEMQKFKEIQTERR. Residues 268–292 traverse the membrane as a helical segment; sequence ATVLVLVVLLLFIICWLPFQISTFL. The Extracellular segment spans residues 293 to 311; the sequence is DTLHRLGILSSCQDERIID. The helical transmembrane segment at 312 to 335 threads the bilayer; sequence VITQIASFMAYSNSCLNPLVYVIV. Topologically, residues 336-391 are cytoplasmic; it reads GKRFRKKSWEVYQGVCQKGGCRSEPIQMENSMGTLRTSISVERQIHKLQDWAGSRQ. The residue at position 347 (tyrosine 347) is a Phosphotyrosine. The S-palmitoyl cysteine moiety is linked to residue cysteine 351. Phosphoserine is present on serine 366. The residue at position 369 (threonine 369) is a Phosphothreonine. A phosphoserine; by GRK6 mark is found at serine 373 and serine 375.

The protein belongs to the G-protein coupled receptor 1 family. Bradykinin receptor subfamily. BDKRB2 sub-subfamily. As to quaternary structure, forms a complex with PECAM1 and GNAQ. Interacts with PECAM1. In terms of tissue distribution, ubiquitous. Widespread in normal smooth muscle tissue and neurons.

It is found in the cell membrane. In terms of biological role, receptor for bradykinin. It is associated with G proteins that activate a phosphatidylinositol-calcium second messenger system. The sequence is that of B2 bradykinin receptor (BDKRB2) from Homo sapiens (Human).